A 1024-amino-acid polypeptide reads, in one-letter code: Error-prone DNA polymerase (1024 aa).

Belongs to the DNA polymerase type-C family. DnaE2 subfamily.

The protein resides in the cytoplasm. The catalysed reaction is DNA(n) + a 2'-deoxyribonucleoside 5'-triphosphate = DNA(n+1) + diphosphate. DNA polymerase involved in damage-induced mutagenesis and translesion synthesis (TLS). It is not the major replicative DNA polymerase. This Vibrio vulnificus (strain YJ016) protein is Error-prone DNA polymerase.